A 364-amino-acid chain; its full sequence is Fructose-bisphosphate aldolase B (364 aa).

Ala-2 bears the N-acetylalanine mark. The residue at position 13 (Lys-13) is an N6-succinyllysine. Residue Ser-36 is modified to Phosphoserine. Residue Thr-39 is modified to Phosphothreonine. Beta-D-fructose 1,6-bisphosphate is bound at residue Arg-43. The residue at position 89 (Ser-89) is a Phosphoserine. At Thr-119 the chain carries Phosphothreonine. At Lys-121 the chain carries N6-succinyllysine. Ser-132 bears the Phosphoserine mark. Glu-188 functions as the Proton acceptor in the catalytic mechanism. Residue Ser-206 is modified to Phosphoserine. The active-site Schiff-base intermediate with dihydroxyacetone-P is Lys-230. Phosphoserine is present on residues Ser-272, Ser-276, Ser-299, and Ser-301. Ser-272 to Gly-274 provides a ligand contact to beta-D-fructose 1,6-bisphosphate. Arg-304 contributes to the beta-D-fructose 1,6-bisphosphate binding site. Position 309 is a phosphoserine (Ser-309). Lys-317 carries the post-translational modification N6-succinyllysine.

It belongs to the class I fructose-bisphosphate aldolase family. Homotetramer. Interacts with BBS1, BBS2, BBS4 and BBS7. Forms a ternary complex with G6PD and TP53; this interaction is direct.

The protein localises to the cytoplasm. The protein resides in the cytosol. Its subcellular location is the cytoskeleton. It localises to the microtubule organizing center. It is found in the centrosome. The protein localises to the centriolar satellite. The enzyme catalyses beta-D-fructose 1,6-bisphosphate = D-glyceraldehyde 3-phosphate + dihydroxyacetone phosphate. The catalysed reaction is beta-D-fructose 1-phosphate = D-glyceraldehyde + dihydroxyacetone phosphate. The protein operates within carbohydrate degradation; glycolysis; D-glyceraldehyde 3-phosphate and glycerone phosphate from D-glucose: step 4/4. Its pathway is carbohydrate biosynthesis; gluconeogenesis. It functions in the pathway carbohydrate metabolism; fructose metabolism. Its function is as follows. Catalyzes the aldol cleavage of fructose 1,6-biphosphate to form two triosephosphates dihydroxyacetone phosphate and D-glyceraldehyde 3-phosphate in glycolysis as well as the reverse stereospecific aldol addition reaction in gluconeogenesis. In fructolysis, metabolizes fructose 1-phosphate derived from the phosphorylation of dietary fructose by fructokinase into dihydroxyacetone phosphate and D-glyceraldehyde. Acts as an adapter independently of its enzymatic activity, exerts a tumor suppressor role by stabilizing the ternary complex with G6PD and TP53 to inhibit G6PD activity and keep oxidative pentose phosphate metabolism in check. The polypeptide is Fructose-bisphosphate aldolase B (Mus musculus (Mouse)).